An 863-amino-acid polypeptide reads, in one-letter code: Valine--tRNA ligase (863 aa).

Residues 43–53 carry the 'HIGH' region motif; sequence PYPTGSFHIGH. The 'KMSKS' region signature appears at 517-521; sequence KMSKS. Position 520 (lysine 520) interacts with ATP.

This sequence belongs to the class-I aminoacyl-tRNA synthetase family. ValS type 2 subfamily.

Its subcellular location is the cytoplasm. It catalyses the reaction tRNA(Val) + L-valine + ATP = L-valyl-tRNA(Val) + AMP + diphosphate. In terms of biological role, catalyzes the attachment of valine to tRNA(Val). As ValRS can inadvertently accommodate and process structurally similar amino acids such as threonine, to avoid such errors, it has a 'posttransfer' editing activity that hydrolyzes mischarged Thr-tRNA(Val) in a tRNA-dependent manner. This is Valine--tRNA ligase from Archaeoglobus fulgidus (strain ATCC 49558 / DSM 4304 / JCM 9628 / NBRC 100126 / VC-16).